The sequence spans 338 residues: tRNA N6-adenosine threonylcarbamoyltransferase (338 aa).

Fe cation contacts are provided by histidine 109 and histidine 113. Substrate-binding positions include 132–136 (AISGA), aspartate 165, glycine 178, and asparagine 277. Aspartate 302 lines the Fe cation pocket.

It belongs to the KAE1 / TsaD family. It depends on Fe(2+) as a cofactor.

It is found in the cytoplasm. The catalysed reaction is L-threonylcarbamoyladenylate + adenosine(37) in tRNA = N(6)-L-threonylcarbamoyladenosine(37) in tRNA + AMP + H(+). Functionally, required for the formation of a threonylcarbamoyl group on adenosine at position 37 (t(6)A37) in tRNAs that read codons beginning with adenine. Is involved in the transfer of the threonylcarbamoyl moiety of threonylcarbamoyl-AMP (TC-AMP) to the N6 group of A37, together with TsaE and TsaB. TsaD likely plays a direct catalytic role in this reaction. This is tRNA N6-adenosine threonylcarbamoyltransferase from Chlamydia trachomatis serovar L2b (strain UCH-1/proctitis).